The primary structure comprises 146 residues: Large ribosomal subunit protein bL19 (146 aa).

Positions 119–146 (DYRKKGEKGVEKVETTPVSADIETQVAE) are disordered.

It belongs to the bacterial ribosomal protein bL19 family.

This protein is located at the 30S-50S ribosomal subunit interface and may play a role in the structure and function of the aminoacyl-tRNA binding site. The polypeptide is Large ribosomal subunit protein bL19 (Bartonella tribocorum (strain CIP 105476 / IBS 506)).